A 271-amino-acid polypeptide reads, in one-letter code: Putative phosphoenolpyruvate synthase regulatory protein (271 aa).

An ADP-binding site is contributed by 151 to 158 (GVSRSGKT).

Belongs to the pyruvate, phosphate/water dikinase regulatory protein family. PSRP subfamily.

It catalyses the reaction [pyruvate, water dikinase] + ADP = [pyruvate, water dikinase]-phosphate + AMP + H(+). The catalysed reaction is [pyruvate, water dikinase]-phosphate + phosphate + H(+) = [pyruvate, water dikinase] + diphosphate. In terms of biological role, bifunctional serine/threonine kinase and phosphorylase involved in the regulation of the phosphoenolpyruvate synthase (PEPS) by catalyzing its phosphorylation/dephosphorylation. This Burkholderia cenocepacia (strain ATCC BAA-245 / DSM 16553 / LMG 16656 / NCTC 13227 / J2315 / CF5610) (Burkholderia cepacia (strain J2315)) protein is Putative phosphoenolpyruvate synthase regulatory protein.